A 429-amino-acid chain; its full sequence is Phosphomethylpyrimidine synthase 1 (429 aa).

Substrate contacts are provided by residues N65, M94, Y123, H162, 184–186 (SRG), 225–228 (DGLR), and E264. Residue H268 coordinates Zn(2+). Residue Y291 coordinates substrate. H332 contacts Zn(2+). 3 residues coordinate [4Fe-4S] cluster: C408, C411, and C415.

The protein belongs to the ThiC family. [4Fe-4S] cluster is required as a cofactor.

The enzyme catalyses 5-amino-1-(5-phospho-beta-D-ribosyl)imidazole + S-adenosyl-L-methionine = 4-amino-2-methyl-5-(phosphooxymethyl)pyrimidine + CO + 5'-deoxyadenosine + formate + L-methionine + 3 H(+). It functions in the pathway cofactor biosynthesis; thiamine diphosphate biosynthesis. Its function is as follows. Catalyzes the synthesis of the hydroxymethylpyrimidine phosphate (HMP-P) moiety of thiamine from aminoimidazole ribotide (AIR) in a radical S-adenosyl-L-methionine (SAM)-dependent reaction. This is Phosphomethylpyrimidine synthase 1 from Methanosphaera stadtmanae (strain ATCC 43021 / DSM 3091 / JCM 11832 / MCB-3).